The chain runs to 126 residues: Phosphoribosyl-AMP cyclohydrolase (126 aa).

Asp76 is a binding site for Mg(2+). Zn(2+) is bound at residue Cys77. Mg(2+) is bound by residues Asp78 and Asp80. Residues Cys94 and Cys101 each contribute to the Zn(2+) site.

This sequence belongs to the PRA-CH family. As to quaternary structure, homodimer. It depends on Mg(2+) as a cofactor. Zn(2+) serves as cofactor.

It is found in the cytoplasm. The catalysed reaction is 1-(5-phospho-beta-D-ribosyl)-5'-AMP + H2O = 1-(5-phospho-beta-D-ribosyl)-5-[(5-phospho-beta-D-ribosylamino)methylideneamino]imidazole-4-carboxamide. The protein operates within amino-acid biosynthesis; L-histidine biosynthesis; L-histidine from 5-phospho-alpha-D-ribose 1-diphosphate: step 3/9. Catalyzes the hydrolysis of the adenine ring of phosphoribosyl-AMP. This is Phosphoribosyl-AMP cyclohydrolase from Ruthia magnifica subsp. Calyptogena magnifica.